A 438-amino-acid polypeptide reads, in one-letter code: GTPase Der (438 aa).

EngA-type G domains follow at residues 4–169 (PVVA…PEKG) and 178–353 (IDVA…DQNS). GTP-binding positions include 10-17 (GRPNVGKS), 57-61 (DTGGI), 120-123 (NKVD), 184-191 (GKPNVGKS), 231-235 (DTAGL), and 296-299 (NKWD). One can recognise a KH-like domain in the interval 354–438 (RRVKTGLLNE…PIRLKFKQKT (85 aa)).

The protein belongs to the TRAFAC class TrmE-Era-EngA-EngB-Septin-like GTPase superfamily. EngA (Der) GTPase family. As to quaternary structure, associates with the 50S ribosomal subunit.

In terms of biological role, GTPase that plays an essential role in the late steps of ribosome biogenesis. This chain is GTPase Der, found in Halothermothrix orenii (strain H 168 / OCM 544 / DSM 9562).